Here is a 66-residue protein sequence, read N- to C-terminus: Large ribosomal subunit protein bL35 (66 aa).

It belongs to the bacterial ribosomal protein bL35 family.

The polypeptide is Large ribosomal subunit protein bL35 (Deinococcus deserti (strain DSM 17065 / CIP 109153 / LMG 22923 / VCD115)).